A 161-amino-acid polypeptide reads, in one-letter code: Non-secretory ribonuclease (161 aa).

Residues 1-27 (MVPKLFTSQICLLLLLGLMGVEGSLHA) form the signal peptide. Trp34 carries a C-linked (Man) tryptophan glycan. The active-site Proton acceptor is His42. N-linked (GlcNAc...) asparagine glycosylation occurs at Asn44. 4 cysteine pairs are disulfide-bonded: Cys50–Cys110, Cys64–Cys123, Cys82–Cys138, and Cys89–Cys98. Tyr60 carries the 3'-nitrotyrosine modification. Substrate is bound at residue 65-69 (KNQNT). 4 N-linked (GlcNAc...) asparagine glycosylation sites follow: Asn86, Asn92, Asn111, and Asn119. His156 (proton donor) is an active-site residue.

Belongs to the pancreatic ribonuclease family. As to quaternary structure, interacts with and forms a tight 1:1 complex with RNH1. Dimerization of two such complexes may occur.

The protein resides in the lysosome. Its subcellular location is the cytoplasmic granule. It catalyses the reaction an [RNA] containing cytidine + H2O = an [RNA]-3'-cytidine-3'-phosphate + a 5'-hydroxy-ribonucleotide-3'-[RNA].. It carries out the reaction an [RNA] containing uridine + H2O = an [RNA]-3'-uridine-3'-phosphate + a 5'-hydroxy-ribonucleotide-3'-[RNA].. Functionally, this is a non-secretory ribonuclease. It is a pyrimidine specific nuclease with a slight preference for U. Cytotoxin and helminthotoxin. Possesses a wide variety of biological activities. This Nomascus leucogenys (Northern white-cheeked gibbon) protein is Non-secretory ribonuclease (RNASE2).